Here is a 697-residue protein sequence, read N- to C-terminus: T-related protein (697 aa).

A disordered region spans residues Met-1 to Gly-60. Composition is skewed to gly residues over residues Val-20 to Ser-35 and His-50 to Gly-60. Positions Leu-96–Asp-264 form a DNA-binding region, T-box. A compositionally biased stretch (low complexity) spans Ser-316–Ser-330. 2 disordered regions span residues Ser-316–Gly-407 and Val-462–Pro-488. The segment covering Ser-337–Tyr-351 has biased composition (polar residues). 3 stretches are compositionally biased toward low complexity: residues Ser-352–Ser-373, Gln-381–Ser-401, and Ser-469–Pro-488.

Its subcellular location is the nucleus. In terms of biological role, required for the specification of the hindgut and anal pads. This is T-related protein (byn) from Drosophila melanogaster (Fruit fly).